Reading from the N-terminus, the 312-residue chain is Malate dehydrogenase (312 aa).

NAD(+) is bound by residues 7–13 and D34; that span reads GAAGGIG. Residues R81 and R87 each coordinate substrate. Residues N94 and 117-119 each bind NAD(+); that span reads ITN. Residues N119 and R153 each contribute to the substrate site. H177 functions as the Proton acceptor in the catalytic mechanism. M227 is a binding site for NAD(+).

Belongs to the LDH/MDH superfamily. MDH type 1 family. As to quaternary structure, homodimer.

It catalyses the reaction (S)-malate + NAD(+) = oxaloacetate + NADH + H(+). Its function is as follows. Catalyzes the reversible oxidation of malate to oxaloacetate. This Cronobacter sakazakii (strain ATCC BAA-894) (Enterobacter sakazakii) protein is Malate dehydrogenase.